We begin with the raw amino-acid sequence, 494 residues long: GTPase Der (494 aa).

2 EngA-type G domains span residues 3–166 (PVVA…VGEK) and 208–381 (IKLA…ECAT). GTP contacts are provided by residues 9 to 16 (GRPNVGKS), 56 to 60 (DTGGI), 118 to 121 (NKTD), 214 to 221 (GRPNVGKS), 261 to 265 (DTAGV), and 326 to 329 (NKWD). Positions 382 to 466 (RRVNTSMLTK…PIRIQFKEGE (85 aa)) constitute a KH-like domain.

Belongs to the TRAFAC class TrmE-Era-EngA-EngB-Septin-like GTPase superfamily. EngA (Der) GTPase family. Associates with the 50S ribosomal subunit.

GTPase that plays an essential role in the late steps of ribosome biogenesis. This chain is GTPase Der, found in Serratia proteamaculans (strain 568).